The following is a 75-amino-acid chain: MRLVVCLVFLASFALVCQGQGCKGPYTRPILRPYVRPVVSYNACTLSCRGITTTQARSCCTRLGRCCHVAKGYSG.

The N-terminal stretch at 1–19 (MRLVVCLVFLASFALVCQG) is a signal peptide. Gln-20 carries the post-translational modification Pyrrolidone carboxylic acid. Disulfide bonds link Cys-44/Cys-59, Cys-48/Cys-66, and Cys-60/Cys-67. Ser-74 carries the post-translational modification Serine amide.

Belongs to the penaeidin family.

It is found in the cytoplasmic granule. Antibacterial and antifungal activity. Presents chitin-binding activity. The protein is Penaeidin-3m of Penaeus setiferus (Atlantic white shrimp).